Reading from the N-terminus, the 676-residue chain is Probable LRR receptor-like serine/threonine-protein kinase At4g31250 (676 aa).

An N-terminal signal peptide occupies residues 1–26 (MTRDDKFPIVYSLLLIVLLFVSPIYG). Topologically, residues 27-242 (DGDADALLKF…LLPCRYTRPP (216 aa)) are extracellular. N42, N73, and N83 each carry an N-linked (GlcNAc...) asparagine glycan. 5 LRR repeats span residues 98 to 122 (IRGL…IDGL), 123 to 146 (VSLA…LFSG), 148 to 171 (KALL…LGKL), 172 to 195 (PKLT…KQKN), and 197 to 218 (VTVN…GLMN). N-linked (GlcNAc...) asparagine glycosylation occurs at N218. A helical membrane pass occupies residues 243 to 263 (FFTVFLLALTILAVVVLITVF). Residues 264–676 (LSVCILSRRQ…RAMTEEFSLM (413 aa)) are Cytoplasmic-facing. Residues 319 to 330 (TVQRDSTATSGA) are compositionally biased toward polar residues. The segment at 319–347 (TVQRDSTATSGAISVGGLSPDEDKRGDQR) is disordered. The region spanning 366-640 (RASAEVLGSG…HEAVDRIEEV (275 aa)) is the Protein kinase domain. Phosphoserine is present on S368. Residues 372–380 (LGSGGFGSS) and K394 contribute to the ATP site. Residues S446 and S543 each carry the phosphoserine modification. Residues 641–676 (DRDAGGGQESVRSSYVTASDGDHRSSRAMTEEFSLM) form a disordered region.

This sequence belongs to the protein kinase superfamily. Ser/Thr protein kinase family.

The protein resides in the membrane. The catalysed reaction is L-seryl-[protein] + ATP = O-phospho-L-seryl-[protein] + ADP + H(+). The enzyme catalyses L-threonyl-[protein] + ATP = O-phospho-L-threonyl-[protein] + ADP + H(+). This is Probable LRR receptor-like serine/threonine-protein kinase At4g31250 from Arabidopsis thaliana (Mouse-ear cress).